Consider the following 372-residue polypeptide: Saccharopine dehydrogenase [NAD(+), L-lysine-forming] (372 aa).

Positions 18 and 77 each coordinate L-saccharopine. Residue Lys77 is the Proton acceptor of the active site. His95 (proton donor) is an active-site residue. Gln100 is a binding site for L-saccharopine. NAD(+) is bound at residue Arg129. Positions 130 and 134 each coordinate L-saccharopine. NAD(+) contacts are provided by residues 200–201, Asp224, Thr228, Tyr248, and Val275; that span reads GR. Cys202 and Cys246 are disulfide-bonded. Residue 276–278 coordinates L-saccharopine; sequence SAD. 316-319 serves as a coordination point for NAD(+); the sequence is IDHL.

The protein belongs to the AlaDH/PNT family. In terms of assembly, monomer.

It catalyses the reaction L-saccharopine + NAD(+) + H2O = L-lysine + 2-oxoglutarate + NADH + H(+). It participates in amino-acid biosynthesis; L-lysine biosynthesis via AAA pathway; L-lysine from L-alpha-aminoadipate (fungal route): step 3/3. Functionally, catalyzes the NAD(+)-dependent cleavage of saccharopine to L-lysine and 2-oxoglutarate, the final step in the alpha-aminoadipate (AAA) pathway for lysin biosynthesis. This is Saccharopine dehydrogenase [NAD(+), L-lysine-forming] (lys-4) from Neurospora crassa (strain ATCC 24698 / 74-OR23-1A / CBS 708.71 / DSM 1257 / FGSC 987).